An 857-amino-acid polypeptide reads, in one-letter code: MSFQLDTSTHGAEIRNVYEKVLSGADDCSWAIFGYEKGQGNILKVVASGNDNDEFLDEFDENAVLFGFLRVKDVNTGLNKFVLVCWCGEAAARKGLFSIHMATVSNLLKGYHVQITGRESSDLNMDDIIRRVADASGSKYSVHTSNSTPQSKHNAFYDASQTFGSTAKVAPAPAPSTKTPLANISKPVVQAQKDSKDNSWDDSSKQSNTQTANTTSNLRVPVNASWSDAGRKEKSQENKPKPTPFGSGGPSKPTPFESHGPAKQISVQPSEHPKPSISTTTTGSSYRSAESSHAPTTPDHFKLTPLTKLEPQPPSGSPSKKPVSELEELHTAGNVNLSARRALFEKKESSTKNVENPVSHHLKSPVRTSFPPASTTASKQDSPSTVPVDKQETAKPINKQVSSNETSAQEEPRESVAALRARFAKANVSENNDPPTFPKTAAKISSFNSKAGTSFAKPRPFTNNPNPISAPEKPTSGESLSLNPPPAMPKVFPERDISSASQKAAQPSVITPSVPQPPAAPVVPEAPSVHQPPAAPVAPEVPSAPQRPAAPVVPEAPSVPQRPAVPVVPEALSVPQPPVAPVAPEVPSVPQPPVAPVVPEAPSVPQPPVAPVAPEVPSVPQRPAVPVVPEAPSVPQPPAAPVVPEVPSVPQRPAVPVVPEAPSVPQPPAAPVVPEVPSVPQPPAVPVVPEAGQLNEPVVPPLPPHDETQEPQVGGDVKATEHTQPTKTPAIVIYDYSPEEENEIELVENEQIQILEFVDDGWWLGENSKGQQGLFPSNYVEITGPNETANNPPAEPQAGGPGKSVKAIYDYQAQEDNELSFFEDEIIANVDCVDPNWWEGECHGHRGLFPSNYVEEI.

One can recognise an ADF-H domain in the interval 6 to 133 (DTSTHGAEIR…NMDDIIRRVA (128 aa)). Disordered regions lie at residues 167-562 (AKVA…VPQR), 585-622 (EVPSVPQPPVAPVVPEAPSVPQPPVAPVAPEVPSVPQR), and 693-723 (QLNEPVVPPLPPHDETQEPQVGGDVKATEHT). Basic and acidic residues predominate over residues 193-204 (KDSKDNSWDDSS). The span at 205 to 217 (KQSNTQTANTTSN) shows a compositional bias: low complexity. The segment covering 229 to 240 (AGRKEKSQENKP) has biased composition (basic and acidic residues). Composition is skewed to polar residues over residues 276–295 (SISTTTTGSSYRSAESSHAP), 371–385 (PPASTTASKQDSPST), 399–409 (KQVSSNETSAQ), 443–452 (KISSFNSKAG), and 498–511 (SSASQKAAQPSVIT). Over residues 522-561 (VVPEAPSVHQPPAAPVAPEVPSAPQRPAAPVVPEAPSVPQ) the composition is skewed to low complexity. Composition is skewed to pro residues over residues 587 to 596 (PSVPQPPVAP) and 602 to 611 (PSVPQPPVAP). Positions 612 to 622 (VAPEVPSVPQR) are enriched in low complexity. SH3 domains lie at 725-785 (PTKT…ITGP) and 800-857 (GPGK…VEEI).

In Schizosaccharomyces pombe (strain 972 / ATCC 24843) (Fission yeast), this protein is Protein app1 (app1).